A 481-amino-acid polypeptide reads, in one-letter code: Phosphoglycerate kinase, chloroplastic (481 aa).

The transit peptide at M1 to S75 directs the protein to the chloroplast. 11 residues coordinate (2R)-3-phosphoglycerate: A98, D99, N101, R115, S137, H138, G140, R141, R196, H228, and R229. G274 serves as a coordination point for ADP. Residue G274 participates in CDP binding. K276 and K280 together coordinate AMP. K280 contacts ATP. Position 298 (G298) interacts with ADP. CDP is bound at residue G298. 2 residues coordinate AMP: G299 and G371. ATP-binding residues include G299 and G371. CDP is bound by residues G396 and F401. Residue F401 coordinates ADP. E402 is an AMP binding site. Positions 402, 433, and 434 each coordinate ATP. Mg(2+) is bound at residue D433.

Belongs to the phosphoglycerate kinase family. In terms of assembly, monomer. Requires Mg(2+) as cofactor.

It is found in the plastid. The protein resides in the chloroplast. The enzyme catalyses (2R)-3-phosphoglycerate + ATP = (2R)-3-phospho-glyceroyl phosphate + ADP. The protein operates within carbohydrate biosynthesis; Calvin cycle. The sequence is that of Phosphoglycerate kinase, chloroplastic from Nicotiana tabacum (Common tobacco).